The following is a 150-amino-acid chain: D-aminoacyl-tRNA deacylase (150 aa).

The Gly-cisPro motif, important for rejection of L-amino acids motif lies at Gly-138–Pro-139.

It belongs to the DTD family. Homodimer.

It localises to the cytoplasm. The enzyme catalyses glycyl-tRNA(Ala) + H2O = tRNA(Ala) + glycine + H(+). It carries out the reaction a D-aminoacyl-tRNA + H2O = a tRNA + a D-alpha-amino acid + H(+). Its function is as follows. An aminoacyl-tRNA editing enzyme that deacylates mischarged D-aminoacyl-tRNAs. Also deacylates mischarged glycyl-tRNA(Ala), protecting cells against glycine mischarging by AlaRS. Acts via tRNA-based rather than protein-based catalysis; rejects L-amino acids rather than detecting D-amino acids in the active site. By recycling D-aminoacyl-tRNA to D-amino acids and free tRNA molecules, this enzyme counteracts the toxicity associated with the formation of D-aminoacyl-tRNA entities in vivo and helps enforce protein L-homochirality. This chain is D-aminoacyl-tRNA deacylase, found in Dechloromonas aromatica (strain RCB).